A 513-amino-acid polypeptide reads, in one-letter code: MAVAAPGQLNLDESPSWGSRSVDCFEKLEQIGEGTYGQVYMAKETETNEIVALKKIRMDNEREGFPITAIREIKILKKLHHQNVIQLKEIVTSPGPERDEQGKPIEGNKYKGSIYMVFEYMDHDLTGLADRPGMRFTVPQIKCYMRQLLTGLHYCHVNQVLHRDIKGSNLLIDNEGNLKLADFGLARSFSSDHNGNLTNRVITLWYRPPELLLGSTRYGPAVDMWSVGCIFAELLNGKPILTGKNEPEQLSKIFELCGTPDELIWPGVTKMPWYNNFKPQRPMKRRVKESFKHFDQHALDLLEKMLTLDPSQRISAKDALDAEYFWTDPLPCDPKSLPKYEASHEFQTKKKRQQQRQAEEAAKRQKLQHPPPHSRLPPIQNPGQPHQIRPGQPMHNAPPVAAGPSHHYAKPRGPGGPNRYPQGGNQGGYNPNRGGQGGGYGSGPYPQQGRGPPPYPGGGMGGAGGPRGGGGSGYGVGGPNYQQGGPYGASGPGRGPNYNQGGSRNQQQYGNWQ.

The 301-residue stretch at 25–325 (FEKLEQIGEG…AKDALDAEYF (301 aa)) folds into the Protein kinase domain. Residues 31–39 (IGEGTYGQV) and lysine 54 contribute to the ATP site. At threonine 35 the chain carries Phosphothreonine. Phosphotyrosine is present on tyrosine 36. The active-site Proton acceptor is the aspartate 164. Serine 191 is modified (phosphoserine). Threonine 198 bears the Phosphothreonine mark. Residues 336-348 (SLPKYEASHEFQT) show a composition bias toward basic and acidic residues. The tract at residues 336–513 (SLPKYEASHE…RNQQQYGNWQ (178 aa)) is disordered. Residues 417–433 (PNRYPQGGNQGGYNPNR) show a composition bias toward low complexity. 2 stretches are compositionally biased toward gly residues: residues 457–478 (GGGM…GVGG) and 485–494 (GPYGASGPGR). A compositionally biased stretch (polar residues) spans 497-513 (NYNQGGSRNQQQYGNWQ).

Belongs to the protein kinase superfamily. CMGC Ser/Thr protein kinase family. CDC2/CDKX subfamily.

It catalyses the reaction L-seryl-[protein] + ATP = O-phospho-L-seryl-[protein] + ADP + H(+). It carries out the reaction L-threonyl-[protein] + ATP = O-phospho-L-threonyl-[protein] + ADP + H(+). The enzyme catalyses [DNA-directed RNA polymerase] + ATP = phospho-[DNA-directed RNA polymerase] + ADP + H(+). This Oryza sativa subsp. japonica (Rice) protein is Cyclin-dependent kinase C-2 (CDKC-2).